A 760-amino-acid polypeptide reads, in one-letter code: BMP/retinoic acid-inducible neural-specific protein 1 (760 aa).

A signal peptide spans 1 to 16 (MNWRFVELLYFLFVWG). In terms of domain architecture, MACPF spans 68–251 (RYKIYREFAR…FVQSALSYIM (184 aa)). 7 N-linked (GlcNAc...) asparagine glycosylation sites follow: Asn156, Asn433, Asn443, Asn553, Asn599, Asn630, and Asn676.

It belongs to the BRINP family.

Its subcellular location is the cytoplasm. Its function is as follows. Plays a role in neurogenesis and brain development. May suppress cell cycle progression in postmitotic neurons by inhibiting G1/S transition. In Rattus norvegicus (Rat), this protein is BMP/retinoic acid-inducible neural-specific protein 1 (Brinp1).